A 180-amino-acid polypeptide reads, in one-letter code: Prorelaxin (180 aa).

The signal sequence occupies residues 1–25 (MLRLFLSHLLGVWLLLSLRARKIPA). Disulfide bonds link C33–C167, C45–C180, and C166–C171. A propeptide spans 53–154 (SSQQHREPRQ…RSRLDAHSRI (102 aa)) (connecting peptide).

This sequence belongs to the insulin family. Heterodimer of a B chain and an A chain linked by two disulfide bonds. Expressed by the placenta. Exclusively detected in cells located in the lamellar placental labyrinth and absent from other placental and non-placental uterine parts.

The protein resides in the secreted. Relaxin is an ovarian hormone that acts with estrogen to produce dilatation of the birth canal in many mammals. In Felis catus (Cat), this protein is Prorelaxin (RLN).